The following is a 136-amino-acid chain: Large ribosomal subunit protein uL16 (136 aa).

It belongs to the universal ribosomal protein uL16 family. In terms of assembly, part of the 50S ribosomal subunit.

Functionally, binds 23S rRNA and is also seen to make contacts with the A and possibly P site tRNAs. The sequence is that of Large ribosomal subunit protein uL16 from Rickettsia typhi (strain ATCC VR-144 / Wilmington).